The following is a 194-amino-acid chain: MTIKLIVGLANPGAEYAATRHNAGAWFVDLLAERLRAPLREEAKFFGYTSRVTLGGEDVRLLVPTTFMNLSGKAVAAMASFFRINPDEILVVHDELDLPPGVAKFKLGGGHGGHNGLKDIISKLGNNPNFHRLRIGIGHPGDKNKVVGFVLGKPPVSEQKLIDEAIDEAVRCTEMWFTDGLTKATNRLHAFKAQ.

Tyrosine 16 contacts tRNA. Histidine 21 serves as the catalytic Proton acceptor. TRNA contacts are provided by phenylalanine 67, asparagine 69, and asparagine 115.

The protein belongs to the PTH family. As to quaternary structure, monomer.

Its subcellular location is the cytoplasm. The catalysed reaction is an N-acyl-L-alpha-aminoacyl-tRNA + H2O = an N-acyl-L-amino acid + a tRNA + H(+). Hydrolyzes ribosome-free peptidyl-tRNAs (with 1 or more amino acids incorporated), which drop off the ribosome during protein synthesis, or as a result of ribosome stalling. In terms of biological role, catalyzes the release of premature peptidyl moieties from peptidyl-tRNA molecules trapped in stalled 50S ribosomal subunits, and thus maintains levels of free tRNAs and 50S ribosomes. This is Peptidyl-tRNA hydrolase from Shigella dysenteriae serotype 1 (strain Sd197).